The following is a 573-amino-acid chain: Heat shock protein 60A (573 aa).

The N-terminal 57 residues, 1 to 57 (MFRLPVSLARSSISRQLAMRGYAKDVRFGPEVRAMMLQGVDVLADAVAVTMGPKGRN), are a transit peptide targeting the mitochondrion.

This sequence belongs to the chaperonin (HSP60) family.

It localises to the mitochondrion matrix. In terms of biological role, prevents misfolding and promotes the refolding and proper assembly of unfolded polypeptides generated under stress conditions. The polypeptide is Heat shock protein 60A (Drosophila melanogaster (Fruit fly)).